A 454-amino-acid polypeptide reads, in one-letter code: Allantoinase (454 aa).

Zn(2+) is bound by residues H59, H61, K150, H190, H246, and D319. K150 is subject to N6-carboxylysine.

The protein belongs to the metallo-dependent hydrolases superfamily. Allantoinase family. Homotetramer. It depends on Zn(2+) as a cofactor. Post-translationally, carboxylation allows a single lysine to coordinate two zinc ions.

It catalyses the reaction (S)-allantoin + H2O = allantoate + H(+). Its pathway is nitrogen metabolism; (S)-allantoin degradation; allantoate from (S)-allantoin: step 1/1. Functionally, catalyzes the conversion of allantoin (5-ureidohydantoin) to allantoic acid by hydrolytic cleavage of the five-member hydantoin ring. This Bacillus licheniformis (strain ATCC 14580 / DSM 13 / JCM 2505 / CCUG 7422 / NBRC 12200 / NCIMB 9375 / NCTC 10341 / NRRL NRS-1264 / Gibson 46) protein is Allantoinase.